The primary structure comprises 529 residues: Autoinducer-2 kinase (529 aa).

This sequence belongs to the FGGY kinase family.

Its subcellular location is the cytoplasm. It catalyses the reaction (S)-4,5-dihydroxypentane-2,3-dione + ATP = (2S)-2-hydroxy-3,4-dioxopentyl phosphate + ADP + H(+). Its function is as follows. Catalyzes the phosphorylation of autoinducer-2 (AI-2) to phospho-AI-2, which subsequently inactivates the transcriptional regulator LsrR and leads to the transcription of the lsr operon. Phosphorylates the ring-open form of (S)-4,5-dihydroxypentane-2,3-dione (DPD), which is the precursor to all AI-2 signaling molecules, at the C5 position. The chain is Autoinducer-2 kinase from Yersinia enterocolitica serotype O:8 / biotype 1B (strain NCTC 13174 / 8081).